The sequence spans 249 residues: Probable transcriptional regulatory protein Strop_1792 (249 aa).

This sequence belongs to the TACO1 family.

It localises to the cytoplasm. The sequence is that of Probable transcriptional regulatory protein Strop_1792 from Salinispora tropica (strain ATCC BAA-916 / DSM 44818 / JCM 13857 / NBRC 105044 / CNB-440).